Consider the following 133-residue polypeptide: Large ribosomal subunit protein uL22 (133 aa).

This sequence belongs to the universal ribosomal protein uL22 family. In terms of assembly, part of the 50S ribosomal subunit.

This protein binds specifically to 23S rRNA; its binding is stimulated by other ribosomal proteins, e.g. L4, L17, and L20. It is important during the early stages of 50S assembly. It makes multiple contacts with different domains of the 23S rRNA in the assembled 50S subunit and ribosome. In terms of biological role, the globular domain of the protein is located near the polypeptide exit tunnel on the outside of the subunit, while an extended beta-hairpin is found that lines the wall of the exit tunnel in the center of the 70S ribosome. The sequence is that of Large ribosomal subunit protein uL22 from Borrelia garinii subsp. bavariensis (strain ATCC BAA-2496 / DSM 23469 / PBi) (Borreliella bavariensis).